Reading from the N-terminus, the 745-residue chain is Phosphate transporter PHO1 homolog 4 (745 aa).

The region spanning 1–290 is the SPX domain; sequence MRFGKEFVSQ…KRNAAKLYME (290 aa). Residues 1-342 lie on the Cytoplasmic side of the membrane; it reads MRFGKEFVSQ…KINKERHLIT (342 aa). Residues 343-363 traverse the membrane as a helical segment; sequence FSTGFFFGCGISLIVALGLII. At 364–383 the chain is on the extracellular side; that stretch reads HARNIMGTPGQRTYMETMFP. Residues 384 to 404 traverse the membrane as a helical segment; the sequence is LYRFFGFVVLHMDVYAANIYF. Topologically, residues 405 to 427 are cytoplasmic; that stretch reads WRRYRVNYSFIFGFKQGTELGYR. The chain crosses the membrane as a helical span at residues 428–448; the sequence is HVLLLSFGLGTLSLCAVLLNL. At 449–464 the chain is on the extracellular side; that stretch reads DMEMDAQTKDYRLVTE. Residues 465-485 traverse the membrane as a helical segment; sequence LIPLFLLVLVIIIVLCPFNIL. The Cytoplasmic segment spans residues 486–615; it reads YRSSRFFFLS…YTLNRGSNWN (130 aa). The EXS domain occupies 550–744; the sequence is TSNIGFRTFY…NYEEDGDHHN (195 aa). The chain crosses the membrane as a helical span at residues 616–636; sequence ITAWVFSGVATFYGTYWDIVL. Over 637–660 the chain is Extracellular; sequence DWGLLQRGCKNSFLRDKLLVPHKT. A helical transmembrane segment spans residues 661–681; that stretch reads VYYAAMVLNVLLRLVWLQTVL. Residues 682 to 745 lie on the Cytoplasmic side of the membrane; that stretch reads DLKFSFLHRE…YEEDGDHHNN (64 aa).

It belongs to the SYG1 (TC 2.A.94) family. As to expression, expressed in root epidermis and cortex, leaf hydathodes, pollen grains and stigma apex.

It localises to the cell membrane. Functionally, may transport inorganic phosphate (Pi). The polypeptide is Phosphate transporter PHO1 homolog 4 (PHO1-H4) (Arabidopsis thaliana (Mouse-ear cress)).